An 806-amino-acid chain; its full sequence is Phenylalanine--tRNA ligase beta subunit (806 aa).

A tRNA-binding domain is found at 40–153; sequence FNSPDYLQLA…ADAIIIDHVS (114 aa). Residues 413–487 enclose the B5 domain; sequence PFSKKLTVNF…KLIDINKLKP (75 aa). Aspartate 465, aspartate 471, glutamate 474, and glutamate 475 together coordinate Mg(2+).

Belongs to the phenylalanyl-tRNA synthetase beta subunit family. Type 1 subfamily. In terms of assembly, tetramer of two alpha and two beta subunits. Mg(2+) serves as cofactor.

It is found in the cytoplasm. The enzyme catalyses tRNA(Phe) + L-phenylalanine + ATP = L-phenylalanyl-tRNA(Phe) + AMP + diphosphate + H(+). This Mycoplasma genitalium (strain ATCC 33530 / DSM 19775 / NCTC 10195 / G37) (Mycoplasmoides genitalium) protein is Phenylalanine--tRNA ligase beta subunit (pheT).